Consider the following 461-residue polypeptide: Porin AaxA (461 aa).

A signal peptide spans 1–22 (MSFRSVLLTALLSLSFTTTMQA).

This sequence belongs to the OprB family.

Its subcellular location is the cell outer membrane. Facilitates L-arginine uptake, as part of the AaxABC system. The arginine uptake by the bacterium in the macrophage may be a virulence factor against the host innate immune response. This is Porin AaxA (aaxA) from Chlamydia trachomatis serovar A (strain ATCC VR-571B / DSM 19440 / HAR-13).